The chain runs to 334 residues: rRNA 2'-O-methyltransferase fibrillarin (334 aa).

The segment covering 1–93 has biased composition (gly residues); the sequence is MEGRGGSRGG…GGKPAAGGKP (93 aa). The tract at residues 1 to 94 is disordered; that stretch reads MEGRGGSRGG…GKPAAGGKPG (94 aa). Residues 184–185, 203–204, 228–229, and 248–251 each bind S-adenosyl-L-methionine; these read TT, EL, DA, and DVAQ.

The protein belongs to the methyltransferase superfamily. Fibrillarin family. As to quaternary structure, component of box C/D small nucleolar ribonucleoprotein (snoRNP) particles. It is associated with the U3, U8 and U13 small nuclear RNAs. Part of the small subunit (SSU) processome, composed of more than 70 proteins and the RNA chaperone small nucleolar RNA (snoRNA) U3. In terms of processing, by homology to other fibrillarins, some or all of the N-terminal domain arginines are modified to asymmetric dimethylarginine (DMA).

It localises to the nucleus. The protein localises to the nucleolus. It catalyses the reaction L-glutaminyl-[histone H2A] + S-adenosyl-L-methionine = N(5)-methyl-L-glutaminyl-[histone H2A] + S-adenosyl-L-homocysteine + H(+). In terms of biological role, S-adenosyl-L-methionine-dependent methyltransferase that has the ability to methylate both RNAs and proteins. Involved in pre-rRNA processing. Utilizes the methyl donor S-adenosyl-L-methionine to catalyze the site-specific 2'-hydroxyl methylation of ribose moieties in pre-ribosomal RNA. Site specificity is provided by a guide RNA that base pairs with the substrate. Methylation occurs at a characteristic distance from the sequence involved in base pairing with the guide RNA. Also acts as a protein methyltransferase by mediating methylation of 'Gln-105' of histone H2A (H2AQ105me), a modification that impairs binding of the FACT complex and is specifically present at 35S ribosomal DNA locus. Part of the small subunit (SSU) processome, first precursor of the small eukaryotic ribosomal subunit. During the assembly of the SSU processome in the nucleolus, many ribosome biogenesis factors, an RNA chaperone and ribosomal proteins associate with the nascent pre-rRNA and work in concert to generate RNA folding, modifications, rearrangements and cleavage as well as targeted degradation of pre-ribosomal RNA by the RNA exosome. In Dictyostelium discoideum (Social amoeba), this protein is rRNA 2'-O-methyltransferase fibrillarin (fbl).